The primary structure comprises 393 residues: Chorismate synthase (393 aa).

NADP(+) is bound by residues Arg-40 and Arg-46. FMN is bound by residues 129-131 (RSS), 249-250 (QA), Gly-301, 316-320 (KPIPT), and Arg-342.

This sequence belongs to the chorismate synthase family. Homotetramer. The cofactor is FMNH2.

It catalyses the reaction 5-O-(1-carboxyvinyl)-3-phosphoshikimate = chorismate + phosphate. The protein operates within metabolic intermediate biosynthesis; chorismate biosynthesis; chorismate from D-erythrose 4-phosphate and phosphoenolpyruvate: step 7/7. In terms of biological role, catalyzes the anti-1,4-elimination of the C-3 phosphate and the C-6 proR hydrogen from 5-enolpyruvylshikimate-3-phosphate (EPSP) to yield chorismate, which is the branch point compound that serves as the starting substrate for the three terminal pathways of aromatic amino acid biosynthesis. This reaction introduces a second double bond into the aromatic ring system. The polypeptide is Chorismate synthase (Geobacter sulfurreducens (strain ATCC 51573 / DSM 12127 / PCA)).